A 487-amino-acid polypeptide reads, in one-letter code: Protein nucleotidyltransferase YdiU (487 aa).

Positions 90, 92, 93, 113, 125, 126, 176, and 183 each coordinate ATP. D252 serves as the catalytic Proton acceptor. The Mg(2+) site is built by N253 and D262. D262 contacts ATP.

Belongs to the SELO family. Requires Mg(2+) as cofactor. It depends on Mn(2+) as a cofactor.

The enzyme catalyses L-seryl-[protein] + ATP = 3-O-(5'-adenylyl)-L-seryl-[protein] + diphosphate. It catalyses the reaction L-threonyl-[protein] + ATP = 3-O-(5'-adenylyl)-L-threonyl-[protein] + diphosphate. The catalysed reaction is L-tyrosyl-[protein] + ATP = O-(5'-adenylyl)-L-tyrosyl-[protein] + diphosphate. It carries out the reaction L-histidyl-[protein] + UTP = N(tele)-(5'-uridylyl)-L-histidyl-[protein] + diphosphate. The enzyme catalyses L-seryl-[protein] + UTP = O-(5'-uridylyl)-L-seryl-[protein] + diphosphate. It catalyses the reaction L-tyrosyl-[protein] + UTP = O-(5'-uridylyl)-L-tyrosyl-[protein] + diphosphate. In terms of biological role, nucleotidyltransferase involved in the post-translational modification of proteins. It can catalyze the addition of adenosine monophosphate (AMP) or uridine monophosphate (UMP) to a protein, resulting in modifications known as AMPylation and UMPylation. The protein is Protein nucleotidyltransferase YdiU of Pseudomonas fluorescens (strain Pf0-1).